The chain runs to 510 residues: 3,4-dihydroxyphenylacetaldehyde synthase (510 aa).

Asparagine 192 is a catalytic residue. Lysine 303 bears the N6-(pyridoxal phosphate)lysine mark.

It belongs to the group II decarboxylase family. Requires pyridoxal 5'-phosphate as cofactor.

The enzyme catalyses L-dopa + O2 + H2O + H(+) = 3,4-dihydroxyphenylacetaldehyde + H2O2 + NH4(+) + CO2. Its function is as follows. Catalyzes the decarboxylation-oxidative deamination of L-3,4-dihydroxyphenylalanine (L-DOPA) to 3,4-dihydroxylphenylacetaldehyde (DHPAA). Involved in cuticle development. Probably responsible for the protein cross-linking during the development of flexible cuticles. The polypeptide is 3,4-dihydroxyphenylacetaldehyde synthase (amd) (Drosophila melanogaster (Fruit fly)).